A 432-amino-acid chain; its full sequence is Neuronal pentraxin-1 (432 aa).

Positions 1 to 22 are cleaved as a signal peptide; sequence MPAGRAARTCALLALCLLGAGA. The disordered stretch occupies residues 90–122; it reads ESQSTLDPGAGEARAGGGRKQPGSGKNTMGDLS. 2 N-linked (GlcNAc...) asparagine glycosylation sites follow: N154 and N193. The Pentraxin (PTX) domain maps to 226-428; that stretch reads DKFQLTFPLR…GATKWTFEAC (203 aa). Residues C256 and C316 are joined by a disulfide bond. The Ca(2+) site is built by N280, E358, Q359, D360, and Q370.

In terms of assembly, homooligomer or heterooligomer (probably pentamer) with neuronal pentraxin receptor (NPTXR). Ca(2+) is required as a cofactor.

Its subcellular location is the secreted. It is found in the cytoplasmic vesicle. The protein resides in the secretory vesicle. The protein localises to the endoplasmic reticulum. Its function is as follows. May be involved in mediating uptake of synaptic material during synapse remodeling or in mediating the synaptic clustering of AMPA glutamate receptors at a subset of excitatory synapses. This chain is Neuronal pentraxin-1 (NPTX1), found in Homo sapiens (Human).